Consider the following 297-residue polypeptide: UTP--glucose-1-phosphate uridylyltransferase YngB (297 aa).

The first 27 residues, 1–27, serve as a signal peptide directing secretion; sequence MRKKVRKAVIPAAGLGTRFLPATKAQP.

The protein belongs to the UDPGP type 2 family. As to quaternary structure, homodimer.

The catalysed reaction is alpha-D-glucose 1-phosphate + UTP + H(+) = UDP-alpha-D-glucose + diphosphate. Its pathway is glycolipid metabolism; diglucosyl-diacylglycerol biosynthesis. In terms of biological role, catalyzes the formation of UDP-glucose from glucose-1-phosphate and UTP. This is an intermediate step in the biosynthesis of diglucosyl-diacylglycerol (Glc2-DAG), i.e. the predominant glycolipid found in B.subtilis membrane, which is also used as a membrane anchor for lipoteichoic acid (LTA). YngB contributes to wall teichoic acid (WTA) glucosylation and glycolipid formation under anaerobic fermentative growth conditions. Might also enter other glycosylation pathways, leading to the decorating of other cell envelope components with glucose residues under anaerobic or other growth conditions. This chain is UTP--glucose-1-phosphate uridylyltransferase YngB (yngB), found in Bacillus subtilis (strain 168).